Here is a 312-residue protein sequence, read N- to C-terminus: Ornithine carbamoyltransferase (312 aa).

Residues 57–60 (STRT), Gln-84, Arg-108, and 135–138 (HPCQ) each bind carbamoyl phosphate. Residues Asn-166, Asp-226, and 230–231 (SM) each bind L-ornithine. Carbamoyl phosphate-binding positions include 265–266 (CL) and Arg-293.

The protein belongs to the aspartate/ornithine carbamoyltransferase superfamily. OTCase family.

The protein localises to the cytoplasm. The enzyme catalyses carbamoyl phosphate + L-ornithine = L-citrulline + phosphate + H(+). The protein operates within amino-acid degradation; L-arginine degradation via ADI pathway; carbamoyl phosphate from L-arginine: step 2/2. Reversibly catalyzes the transfer of the carbamoyl group from carbamoyl phosphate (CP) to the N(epsilon) atom of ornithine (ORN) to produce L-citrulline. This is Ornithine carbamoyltransferase from Brucella abortus (strain 2308).